The following is a 130-amino-acid chain: Small ribosomal subunit protein uS11 (130 aa).

Belongs to the universal ribosomal protein uS11 family. As to quaternary structure, part of the 30S ribosomal subunit. Interacts with proteins S7 and S18. Binds to IF-3.

Functionally, located on the platform of the 30S subunit, it bridges several disparate RNA helices of the 16S rRNA. Forms part of the Shine-Dalgarno cleft in the 70S ribosome. The sequence is that of Small ribosomal subunit protein uS11 from Rippkaea orientalis (strain PCC 8801 / RF-1) (Cyanothece sp. (strain PCC 8801)).